Reading from the N-terminus, the 75-residue chain is Protein Tlp homolog (75 aa).

The disordered stretch occupies residues 53–75 (REALDGMREEIKDEARDKKNGYM).

The protein belongs to the Tlp family.

This Clostridium botulinum (strain Langeland / NCTC 10281 / Type F) protein is Protein Tlp homolog.